We begin with the raw amino-acid sequence, 2194 residues long: Glutamate synthase [NADH], amyloplastic (2194 aa).

The N-terminal 101 residues, 1–101, are a transit peptide targeting the amyloplast; the sequence is MSNSLSLTFT…LYDPAFDKDS (101 aa). C102 functions as the Nucleophile in the catalytic mechanism. A Glutamine amidotransferase type-2 domain is found at 102-503; sequence CGVGFVAELN…PGMMLLVDFE (402 aa). The interval 1021 to 1045 is disordered; it reads GGKSNTGEGGEQPSRMEPLADGSRN. 1193-1250 lines the FMN pocket; sequence LAETHQTLVANDLRGRTTLQTDGQLKTGRDVAIAALLGAEEYGFSTAPLITLGCIMMR. The [3Fe-4S] cluster site is built by C1246, C1252, and C1257. Residue 1974-1988 coordinates NAD(+); sequence GGGDTGTDCIGTSIR.

Belongs to the glutamate synthase family. Monomer. [3Fe-4S] cluster serves as cofactor. The cofactor is FAD. It depends on FMN as a cofactor. As to expression, expressed in infected cells in root nodules. Barely detected in roots and stems.

Its subcellular location is the plastid. It is found in the amyloplast. The catalysed reaction is 2 L-glutamate + NAD(+) = L-glutamine + 2-oxoglutarate + NADH + H(+). The protein operates within amino-acid biosynthesis; L-glutamate biosynthesis via GLT pathway; L-glutamate from 2-oxoglutarate and L-glutamine (NAD(+) route): step 1/1. It functions in the pathway energy metabolism; nitrogen metabolism. Its activity is regulated as follows. Inhibited by malate, citrate, glutamate, NAD(+) and azaserine, but not by 2-2' dipyridil and N-ethylmaleimide. Functionally, required for the assimilation of symbiotically fixed nitrogen into amino acids in root nodules. The sequence is that of Glutamate synthase [NADH], amyloplastic from Medicago sativa (Alfalfa).